The chain runs to 119 residues: UPF0102 protein FP2501 (119 aa).

The protein belongs to the UPF0102 family.

This Flavobacterium psychrophilum (strain ATCC 49511 / DSM 21280 / CIP 103535 / JIP02/86) protein is UPF0102 protein FP2501.